Reading from the N-terminus, the 99-residue chain is Malonate decarboxylase acyl carrier protein (99 aa).

The residue at position 25 (serine 25) is an O-(phosphoribosyl dephospho-coenzyme A)serine.

The protein belongs to the MdcC family. Covalently binds the prosthetic group of malonate decarboxylase.

The protein localises to the cytoplasm. Subunit of malonate decarboxylase, it is an acyl carrier protein to which acetyl and malonyl thioester residues are bound via a 2'-(5''-phosphoribosyl)-3'-dephospho-CoA prosthetic group and turn over during the catalytic mechanism. This Pseudomonas paraeruginosa (strain DSM 24068 / PA7) (Pseudomonas aeruginosa (strain PA7)) protein is Malonate decarboxylase acyl carrier protein.